Reading from the N-terminus, the 378-residue chain is Cell death-related nuclease 6 (378 aa).

The first 17 residues, 1 to 17 (MIRQIILIVSLIGISNA), serve as a signal peptide directing secretion. N-linked (GlcNAc...) asparagine glycans are attached at residues Asn-51, Asn-92, and Asn-111.

It belongs to the DNase II family.

Functionally, involved in apoptotic DNA degradation. In Caenorhabditis elegans, this protein is Cell death-related nuclease 6 (crn-6).